The following is a 269-amino-acid chain: Tryptophan synthase alpha chain (269 aa).

Active-site proton acceptor residues include Glu49 and Asp60.

It belongs to the TrpA family. As to quaternary structure, tetramer of two alpha and two beta chains.

It carries out the reaction (1S,2R)-1-C-(indol-3-yl)glycerol 3-phosphate + L-serine = D-glyceraldehyde 3-phosphate + L-tryptophan + H2O. The protein operates within amino-acid biosynthesis; L-tryptophan biosynthesis; L-tryptophan from chorismate: step 5/5. In terms of biological role, the alpha subunit is responsible for the aldol cleavage of indoleglycerol phosphate to indole and glyceraldehyde 3-phosphate. In Buchnera aphidicola subsp. Acyrthosiphon pisum (strain APS) (Acyrthosiphon pisum symbiotic bacterium), this protein is Tryptophan synthase alpha chain.